Consider the following 143-residue polypeptide: Large ribosomal subunit protein uL15 (143 aa).

Positions 1-52 (MKLNTLAPAAGSKSAPKRLGRGIGSGLGKTSGKGHKGQKARSGGYHKVGFEG) are disordered. Residues 21–31 (RGIGSGLGKTS) are compositionally biased toward gly residues.

This sequence belongs to the universal ribosomal protein uL15 family. In terms of assembly, part of the 50S ribosomal subunit.

Its function is as follows. Binds to the 23S rRNA. The sequence is that of Large ribosomal subunit protein uL15 from Francisella tularensis subsp. mediasiatica (strain FSC147).